The primary structure comprises 881 residues: DNA mismatch repair protein MutS (881 aa).

612–619 (GPNMAGKS) is a binding site for ATP.

This sequence belongs to the DNA mismatch repair MutS family.

Its function is as follows. This protein is involved in the repair of mismatches in DNA. It is possible that it carries out the mismatch recognition step. This protein has a weak ATPase activity. The polypeptide is DNA mismatch repair protein MutS (Clostridium tetani (strain Massachusetts / E88)).